The primary structure comprises 250 residues: Hydroxyacylglutathione hydrolase (250 aa).

Residues H53, H55, D57, H58, H110, D127, and H165 each contribute to the Zn(2+) site.

The protein belongs to the metallo-beta-lactamase superfamily. Glyoxalase II family. Monomer. It depends on Zn(2+) as a cofactor.

It catalyses the reaction an S-(2-hydroxyacyl)glutathione + H2O = a 2-hydroxy carboxylate + glutathione + H(+). Its pathway is secondary metabolite metabolism; methylglyoxal degradation; (R)-lactate from methylglyoxal: step 2/2. Its function is as follows. Thiolesterase that catalyzes the hydrolysis of S-D-lactoyl-glutathione to form glutathione and D-lactic acid. The sequence is that of Hydroxyacylglutathione hydrolase from Photorhabdus laumondii subsp. laumondii (strain DSM 15139 / CIP 105565 / TT01) (Photorhabdus luminescens subsp. laumondii).